A 334-amino-acid polypeptide reads, in one-letter code: S-adenosylmethionine:tRNA ribosyltransferase-isomerase (334 aa).

This sequence belongs to the QueA family. Monomer.

It localises to the cytoplasm. It carries out the reaction 7-aminomethyl-7-carbaguanosine(34) in tRNA + S-adenosyl-L-methionine = epoxyqueuosine(34) in tRNA + adenine + L-methionine + 2 H(+). It functions in the pathway tRNA modification; tRNA-queuosine biosynthesis. In terms of biological role, transfers and isomerizes the ribose moiety from AdoMet to the 7-aminomethyl group of 7-deazaguanine (preQ1-tRNA) to give epoxyqueuosine (oQ-tRNA). This Rubrobacter xylanophilus (strain DSM 9941 / JCM 11954 / NBRC 16129 / PRD-1) protein is S-adenosylmethionine:tRNA ribosyltransferase-isomerase.